A 362-amino-acid polypeptide reads, in one-letter code: MLCVNVELKERRYPIYIGSGLLSDEKCYPLKSGDKVMIVTNPTIAQYYLSQVTDTLVKKGCLVEHVVLSDGEQYKTLDSLNLIFTALLQGNHGRDTTIIALGGGVIGDVAGYAAASYQRGVRFIQIPTTLLAQVDSSVGGKTAVNHALGKNMIGAFYQPCTVIIDTLTLNSLPKREINAGLAEVIKYGAILDLPFFTWLEQNIDSLVARDPDNLQTCIARCCQIKADVVARDETEKGDRALLNLGHTFGHAIETHLGYGHWLHGEAVAVGMLMAAVLSEKLGNLTKTDVARLERLLARANLPTVSPDTMQPEDYLPHMLRDKKVLAGKLRLVLLASLGQAYVATDTDPALVLDAIRCCTQVN.

Residues 70 to 75 (DGEQYK), 104 to 108 (GVIGD), 128 to 129 (TT), K141, and K150 each bind NAD(+). 3 residues coordinate Zn(2+): E183, H246, and H263.

The protein belongs to the sugar phosphate cyclases superfamily. Dehydroquinate synthase family. Requires NAD(+) as cofactor. Co(2+) is required as a cofactor. It depends on Zn(2+) as a cofactor.

The protein resides in the cytoplasm. The enzyme catalyses 7-phospho-2-dehydro-3-deoxy-D-arabino-heptonate = 3-dehydroquinate + phosphate. It functions in the pathway metabolic intermediate biosynthesis; chorismate biosynthesis; chorismate from D-erythrose 4-phosphate and phosphoenolpyruvate: step 2/7. Functionally, catalyzes the conversion of 3-deoxy-D-arabino-heptulosonate 7-phosphate (DAHP) to dehydroquinate (DHQ). The chain is 3-dehydroquinate synthase from Pasteurella multocida (strain Pm70).